A 121-amino-acid polypeptide reads, in one-letter code: Large ribosomal subunit protein bL12 (121 aa).

Belongs to the bacterial ribosomal protein bL12 family. In terms of assembly, homodimer. Part of the ribosomal stalk of the 50S ribosomal subunit. Forms a multimeric L10(L12)X complex, where L10 forms an elongated spine to which 2 to 4 L12 dimers bind in a sequential fashion. Binds GTP-bound translation factors.

Its function is as follows. Forms part of the ribosomal stalk which helps the ribosome interact with GTP-bound translation factors. Is thus essential for accurate translation. In Limosilactobacillus fermentum (strain NBRC 3956 / LMG 18251) (Lactobacillus fermentum), this protein is Large ribosomal subunit protein bL12.